Here is a 210-residue protein sequence, read N- to C-terminus: MAQAKISAKAHEGRFCRSSSMADRSSRLLESLDQLELRVEALRDAATAVEQEKEILLEMIHSIQNSQDMRQISDGEREELNLTANRLMGRTLTVEVSVETIRNPQQEESLKHATRIIDEVVSKFLDDLGNAKSHLMSLYSACSSEVPPGPVDQKFQSIVIGCALEDQKKIKRRLETLLRNIDNSDKAIKLLEHAKGAGSKSLQNTDGKFN.

An N-acetylalanine modification is found at A2. Phosphoserine occurs at positions 20, 31, and 73. A coiled-coil region spans residues 20-60 (SMADRSSRLLESLDQLELRVEALRDAATAVEQEKEILLEMI). The 81-residue stretch at 109–189 (SLKHATRIID…NIDNSDKAIK (81 aa)) folds into the BAG domain.

In terms of assembly, binds to the ATPase domain of HSP/HSC70 chaperones. May interact with NWD1. Interacts with HSPA1A (via NBD), HSPA1B (via NBD) and HSPA8. May interact with DNJC9; the interaction seems to be histone-dependent.

In terms of biological role, co-chaperone for HSP70 and HSC70 chaperone proteins. Acts as a nucleotide-exchange factor (NEF) promoting the release of ADP from the HSP70 and HSC70 proteins thereby triggering client/substrate protein release. The polypeptide is BAG family molecular chaperone regulator 2 (Bag2) (Mus musculus (Mouse)).